The sequence spans 250 residues: Protein orai-2 (250 aa).

The next 4 helical transmembrane spans lie at Thr-66–Leu-83, Leu-94–Ile-114, Leu-148–Leu-168, and Ala-192–Ile-212.

This sequence belongs to the Orai family. As to quaternary structure, oligomerizes in homomeric and heteromeric ORAI complexes. Native CRAC channels most likely consist of hexameric ORAI heteromers, implying that diverse ORAI1, ORAI2 and ORAI3 subunit combinations with distinct biophysical properties can operate in a cell-type specific way. Interacts with STIM1; this regulates channel activity. Interacts with CRACR2A/EFCAB4B.

It localises to the cell membrane. It carries out the reaction Ca(2+)(in) = Ca(2+)(out). CRAC channels are regulated by fast Ca(2+)-dependent inactivation (FCDI), a mechanism that limits Ca(2+) influx and cell toxicity. ORAI2 channels display prominent FCDI. Inhibited by lanthanides such as Gd(3+) ions. Pore-forming subunit of inward rectifying Ca(2+) release-activated Ca(2+) (CRAC) channels. Assembles with ORAI1 and ORAI3 to form hexameric CRAC channels that mediate Ca(2+) influx upon depletion of endoplasmic reticulum Ca(2+) store and channel activation by Ca(2+) sensor STIM1, a process known as store-operated Ca(2+) entry (SOCE). Various pore subunit combinations may account for distinct CRAC channel spatiotemporal and cell-type specific dynamics. ORAI1 mainly contributes to the generation of Ca(2+) plateaus involved in sustained Ca(2+) entry and is dispensable for cytosolic Ca(2+) oscillations, whereas ORAI2 and ORAI3 generate oscillatory patterns. CRAC channels assemble in Ca(2+) signaling microdomains where Ca(2+) influx is coupled to calmodulin and calcineurin signaling and activation of NFAT transcription factors recruited to ORAI1 via AKAP5. CRAC channels are the main pathway for Ca(2+) influx in T cells and promote the immune response to pathogens by activating NFAT-dependent cytokine and chemokine transcription. In Mus musculus (Mouse), this protein is Protein orai-2 (Orai2).